Consider the following 123-residue polypeptide: Phosphoribosyl-AMP cyclohydrolase (123 aa).

Aspartate 76 provides a ligand contact to Mg(2+). A Zn(2+)-binding site is contributed by cysteine 77. Mg(2+)-binding residues include aspartate 78 and aspartate 80. Positions 93 and 100 each coordinate Zn(2+).

This sequence belongs to the PRA-CH family. Homodimer. It depends on Mg(2+) as a cofactor. Zn(2+) serves as cofactor.

It localises to the cytoplasm. It carries out the reaction 1-(5-phospho-beta-D-ribosyl)-5'-AMP + H2O = 1-(5-phospho-beta-D-ribosyl)-5-[(5-phospho-beta-D-ribosylamino)methylideneamino]imidazole-4-carboxamide. Its pathway is amino-acid biosynthesis; L-histidine biosynthesis; L-histidine from 5-phospho-alpha-D-ribose 1-diphosphate: step 3/9. Functionally, catalyzes the hydrolysis of the adenine ring of phosphoribosyl-AMP. The polypeptide is Phosphoribosyl-AMP cyclohydrolase (Methanocorpusculum labreanum (strain ATCC 43576 / DSM 4855 / Z)).